We begin with the raw amino-acid sequence, 633 residues long: DNA topoisomerase 1 (633 aa).

The 110-residue stretch at 6-115 (KKYIVVESPA…KNRIVFSEIT (110 aa)) folds into the Toprim domain. Residues Glu-12 and Asp-84 each coordinate Mg(2+). In terms of domain architecture, Topo IA-type catalytic spans 130–543 (DMKKVRAQLA…EFYESFSSVF (414 aa)). The tract at residues 164-169 (SAGRVQ) is interaction with DNA. Tyr-288 acts as the O-(5'-phospho-DNA)-tyrosine intermediate in catalysis. Disulfide bonds link Cys-559-Cys-578 and Cys-561-Cys-580. The segment at 559 to 580 (CSCGKEMRLSFGKYGFYLKCEC) adopts a C4-type zinc-finger fold. Positions 601 to 633 (LGRKDSESGSPDGRSVEGKGNLSEKRRKGKKGS) are disordered.

It belongs to the type IA topoisomerase family. As to quaternary structure, monomer. It depends on Mg(2+) as a cofactor.

The catalysed reaction is ATP-independent breakage of single-stranded DNA, followed by passage and rejoining.. In terms of biological role, releases the supercoiling and torsional tension of DNA, which is introduced during the DNA replication and transcription, by transiently cleaving and rejoining one strand of the DNA duplex. Introduces a single-strand break via transesterification at a target site in duplex DNA. The scissile phosphodiester is attacked by the catalytic tyrosine of the enzyme, resulting in the formation of a DNA-(5'-phosphotyrosyl)-enzyme intermediate and the expulsion of a 3'-OH DNA strand. The free DNA strand then undergoes passage around the unbroken strand, thus removing DNA supercoils. Finally, in the religation step, the DNA 3'-OH attacks the covalent intermediate to expel the active-site tyrosine and restore the DNA phosphodiester backbone. This chain is DNA topoisomerase 1, found in Thermotoga maritima (strain ATCC 43589 / DSM 3109 / JCM 10099 / NBRC 100826 / MSB8).